Consider the following 141-residue polypeptide: Hemoglobin subunit alpha (141 aa).

One can recognise a Globin domain in the interval V1–R141. S3 is subject to Phosphoserine. An N6-succinyllysine mark is found at K7 and K11. Position 16 is an N6-acetyllysine; alternate (K16). At K16 the chain carries N6-succinyllysine; alternate. Phosphotyrosine is present on Y24. Position 35 is a phosphoserine (S35). An N6-succinyllysine modification is found at K40. S49 carries the post-translational modification Phosphoserine. H58 is a binding site for O2. Position 87 (H87) interacts with heme b. At S102 the chain carries Phosphoserine. Residue T108 is modified to Phosphothreonine. A Phosphoserine modification is found at S124. 2 positions are modified to phosphothreonine: T134 and T137. Residue S138 is modified to Phosphoserine.

The protein belongs to the globin family. In terms of assembly, heterotetramer of two alpha chains and two beta chains. As to expression, red blood cells.

Functionally, involved in oxygen transport from the lung to the various peripheral tissues. Its function is as follows. Hemopressin acts as an antagonist peptide of the cannabinoid receptor CNR1. Hemopressin-binding efficiently blocks cannabinoid receptor CNR1 and subsequent signaling. The chain is Hemoglobin subunit alpha (HBA) from Panthera tigris sumatrae (Sumatran tiger).